Consider the following 166-residue polypeptide: Polyadenylate-binding protein 2 (166 aa).

The RRM domain maps to 55 to 132 (QSVYVGNVDY…RPLKVTPKRT (78 aa)). Positions 129–166 (PKRTNVPGMSRGRGRGRGRGRGRGRGGYRGRARGFAPY) are disordered. Basic residues predominate over residues 140–160 (GRGRGRGRGRGRGRGGYRGRA).

Its subcellular location is the nucleus. This chain is Polyadenylate-binding protein 2 (pab2), found in Schizosaccharomyces pombe (strain 972 / ATCC 24843) (Fission yeast).